The primary structure comprises 93 residues: Putative pterin-4-alpha-carbinolamine dehydratase (93 aa).

This sequence belongs to the pterin-4-alpha-carbinolamine dehydratase family.

The catalysed reaction is (4aS,6R)-4a-hydroxy-L-erythro-5,6,7,8-tetrahydrobiopterin = (6R)-L-erythro-6,7-dihydrobiopterin + H2O. This is Putative pterin-4-alpha-carbinolamine dehydratase from Roseiflexus castenholzii (strain DSM 13941 / HLO8).